The primary structure comprises 86 residues: Co-chaperonin GroES (86 aa).

This sequence belongs to the GroES chaperonin family. In terms of assembly, heptamer of 7 subunits arranged in a ring. Interacts with the chaperonin GroEL.

Its subcellular location is the cytoplasm. In terms of biological role, together with the chaperonin GroEL, plays an essential role in assisting protein folding. The GroEL-GroES system forms a nano-cage that allows encapsulation of the non-native substrate proteins and provides a physical environment optimized to promote and accelerate protein folding. GroES binds to the apical surface of the GroEL ring, thereby capping the opening of the GroEL channel. This chain is Co-chaperonin GroES, found in Sulfurovum sp. (strain NBC37-1).